A 1183-amino-acid polypeptide reads, in one-letter code: DNA-directed RNA polymerase subunit beta (1183 aa).

Positions 1153-1162 are enriched in acidic residues; sequence DMQDNEEEDV. The tract at residues 1153-1183 is disordered; sequence DMQDNEEEDVVERKVDLQQKDAPQSQKEVTD. Polar residues predominate over residues 1173–1183; the sequence is DAPQSQKEVTD.

It belongs to the RNA polymerase beta chain family. As to quaternary structure, the RNAP catalytic core consists of 2 alpha, 1 beta, 1 beta' and 1 omega subunit. When a sigma factor is associated with the core the holoenzyme is formed, which can initiate transcription.

The enzyme catalyses RNA(n) + a ribonucleoside 5'-triphosphate = RNA(n+1) + diphosphate. DNA-dependent RNA polymerase catalyzes the transcription of DNA into RNA using the four ribonucleoside triphosphates as substrates. This chain is DNA-directed RNA polymerase subunit beta, found in Staphylococcus saprophyticus subsp. saprophyticus (strain ATCC 15305 / DSM 20229 / NCIMB 8711 / NCTC 7292 / S-41).